A 311-amino-acid chain; its full sequence is Bifunctional protein FolD (311 aa).

Position 174–176 (174–176 (GKG)) interacts with NADP(+).

It belongs to the tetrahydrofolate dehydrogenase/cyclohydrolase family. In terms of assembly, homodimer.

It carries out the reaction (6R)-5,10-methylene-5,6,7,8-tetrahydrofolate + NADP(+) = (6R)-5,10-methenyltetrahydrofolate + NADPH. The enzyme catalyses (6R)-5,10-methenyltetrahydrofolate + H2O = (6R)-10-formyltetrahydrofolate + H(+). It participates in one-carbon metabolism; tetrahydrofolate interconversion. In terms of biological role, catalyzes the oxidation of 5,10-methylenetetrahydrofolate to 5,10-methenyltetrahydrofolate and then the hydrolysis of 5,10-methenyltetrahydrofolate to 10-formyltetrahydrofolate. The chain is Bifunctional protein FolD from Pyrobaculum arsenaticum (strain DSM 13514 / JCM 11321 / PZ6).